The sequence spans 424 residues: MFLLPRFCLVCSIIGTFGFENPPTNVVSHFNDDWFLFGDSRSDCNHVVNTNPRNYSYMDLNPALCDSGKISSKAGNSIFRSFHFTDFYNYTGEGQQIIFYEGVNFTPYHAFKCTSAGNNDIWMQNKGLFYTQVYKKMAVYRSLTLVNVPYVYNGSAQPTAFCKSGSLILNNPAYIAREANVGDYYYKSEADFSLSGCDEYIVPLCIFNGKFLSNTKYYDDSQYYFNKDTGVIYGLNSTETITTGFDFNCHYLVLPSGNYLAISNELLLTVPTKAICLNKRKVFTPVQVVDSRWNNARQSDNMTAVACQLPYCYFRNSTSNYVGIHDVNHGDAGFTSILSGLLYDSPCFSQQGVFRYDNVSTVWPLFPFGNCPTAASIISSDLPICVYDPLPIILLGILLGVAVIVIVVLLLYFMVDNGIRQHYA.

Positions 1–16 (MFLLPRFCLVCSIIGT) are cleaved as a signal peptide. The interval 7–127 (FCLVCSIIGT…NNDIWMQNKG (121 aa)) is esterase domain 1. Over 17–392 (FGFENPPTNV…PICVYDPLPI (376 aa)) the chain is Virion surface. Ser-40 functions as the Nucleophile in the catalytic mechanism. Cysteines 44 and 65 form a disulfide. N-linked (GlcNAc...) asparagine; by host glycans are attached at residues Asn-54, Asn-89, Asn-153, Asn-236, and Asn-301. 3 cysteine pairs are disulfide-bonded: Cys-113–Cys-162, Cys-197–Cys-276, and Cys-205–Cys-249. The interval 128–266 (LFYTQVYKKM…GNYLAISNEL (139 aa)) is receptor binding. The esterase domain 2 stretch occupies residues 267-379 (LLTVPTKAIC…NCPTAASIIS (113 aa)). Cys-307 and Cys-312 form a disulfide bridge. An N-linked (GlcNAc...) asparagine; by host glycan is attached at Asn-316. Active-site charge relay system residues include Asp-326 and His-329. An intrachain disulfide couples Cys-347 to Cys-371. A glycan (N-linked (GlcNAc...) asparagine; by host) is linked at Asn-358. Residues 393 to 413 (ILLGILLGVAVIVIVVLLLYF) form a helical membrane-spanning segment. Residues 414–424 (MVDNGIRQHYA) lie on the Intravirion side of the membrane.

This sequence belongs to the influenza type C/coronaviruses hemagglutinin-esterase family. As to quaternary structure, homodimer; disulfide-linked. Forms a complex with the M protein in the pre-Golgi. Associates then with S-M complex to form a ternary complex S-M-HE. N-glycosylated in the host RER.

The protein resides in the virion membrane. It is found in the host cell membrane. The enzyme catalyses N-acetyl-9-O-acetylneuraminate + H2O = N-acetylneuraminate + acetate + H(+). It catalyses the reaction N-acetyl-4-O-acetylneuraminate + H2O = N-acetylneuraminate + acetate + H(+). In terms of biological role, structural protein that makes short spikes at the surface of the virus. Contains receptor binding and receptor-destroying activities. Mediates de-O-acetylation of N-acetyl-4-O-acetylneuraminic acid, which is probably the receptor determinant recognized by the virus on the surface of erythrocytes and susceptible cells. This receptor-destroying activity is important for virus release as it probably helps preventing self-aggregation and ensures the efficient spread of the progeny virus from cell to cell. May serve as a secondary viral attachment protein for initiating infection, the spike protein being the major one. May become a target for both the humoral and the cellular branches of the immune system. This is Hemagglutinin-esterase from Sus scrofa (Pig).